The sequence spans 269 residues: CCAAT/enhancer-binding protein delta (269 aa).

Disordered stretches follow at residues 1 to 48 (MSAA…PGAA), 97 to 133 (PLEL…APGS), and 151 to 219 (AAGQ…NQEM). Serine 2 carries the post-translational modification N-acetylserine. 2 stretches are compositionally biased toward low complexity: residues 36-48 (GAEP…PGAA) and 97-107 (PLELLPGGPAR). A Glycyl lysine isopeptide (Lys-Gly) (interchain with G-Cter in SUMO) cross-link involves residue lysine 120. Over residues 155–175 (PTPPTSPEPPRSSPRQTPAPG) the composition is skewed to pro residues. Residues 177 to 201 (AREKSAGKRGPDRGSPEYRQRRERN) are compositionally biased toward basic and acidic residues. Positions 191–254 (SPEYRQRRER…AGLRQFFKQL (64 aa)) constitute a bZIP domain. Positions 195–222 (RQRRERNNIAVRKSRDKAKRRNQEMQQK) are basic motif. The leucine-zipper stretch occupies residues 226–254 (LSAENEKLHQRVEQLTRDLAGLRQFFKQL).

The protein belongs to the bZIP family. C/EBP subfamily. Binds DNA as a homodimer and as a heterodimer. Can form stable heterodimers with CEBPB. Can form stable heterodimers with CEBPA and CEBPE. Directly interacts with SPI1/PU.1; this interaction does not affect DNA-binding properties of each partner. Interacts with PRDM16.

It is found in the nucleus. Transcription activator that recognizes two different DNA motifs: the CCAAT homology common to many promoters and the enhanced core homology common to many enhancers. Important transcription factor regulating the expression of genes involved in immune and inflammatory responses. Transcriptional activator that enhances IL6 transcription alone and as heterodimer with CEBPB. The chain is CCAAT/enhancer-binding protein delta (CEBPD) from Homo sapiens (Human).